The chain runs to 201 residues: Cold shock domain-containing protein 4 (201 aa).

S2 bears the N-acetylserine mark. One can recognise a CSD domain in the interval 14-81; the sequence is RRKGTVKWFD…RPKAIEVSGP (68 aa). Positions 66–109 are disordered; sequence EVDNSGRPKAIEVSGPDGAPVQGNSGGGGSSGGRGGFGGGGGRG. Over residues 89–109 the composition is skewed to gly residues; that stretch reads NSGGGGSSGGRGGFGGGGGRG. CCHC-type zinc fingers lie at residues 136-153 and 180-197; these read NSCFKCGEPGHMARECSQ and LSCYSCGESGHFARDCTS.

Belongs to the cold shock protein (CSP) family. In terms of tissue distribution, mostly expressed in shoot apices and siliques, and, to a lower extent, in roots, cotyledons, stems, shoots, leaves, floral buds and flowers. Present in shoot apical meristems and siliques (at protein level). Very low levels are observed in cv. Landsberg erecta compared to cv. Columbia.

It is found in the cytoplasm. The protein localises to the nucleus. It localises to the nucleolus. Functionally, chaperone that binds to and unwinds RNA and both single-stranded DNA and double-stranded DNA (ssDNA and dsDNA DNA). Regulates the flowering transition and flower and seed development, particularly at late stages of embryo development, through regulation of gene expression (including MEA, FIS2, AP1, CAL, AG and SHP2). This is Cold shock domain-containing protein 4 (CSP4) from Arabidopsis thaliana (Mouse-ear cress).